Consider the following 280-residue polypeptide: Pantothenate synthetase (280 aa).

Residue Met-30–His-37 participates in ATP binding. His-37 (proton donor) is an active-site residue. Gln-61 is a (R)-pantoate binding site. Gln-61 contacts beta-alanine. Gly-147–Asp-150 is a binding site for ATP. Gln-153 contacts (R)-pantoate. ATP contacts are provided by residues Val-176 and Met-184–Arg-187.

This sequence belongs to the pantothenate synthetase family. As to quaternary structure, homodimer.

The protein resides in the cytoplasm. It carries out the reaction (R)-pantoate + beta-alanine + ATP = (R)-pantothenate + AMP + diphosphate + H(+). It functions in the pathway cofactor biosynthesis; (R)-pantothenate biosynthesis; (R)-pantothenate from (R)-pantoate and beta-alanine: step 1/1. In terms of biological role, catalyzes the condensation of pantoate with beta-alanine in an ATP-dependent reaction via a pantoyl-adenylate intermediate. The protein is Pantothenate synthetase of Thermotoga petrophila (strain ATCC BAA-488 / DSM 13995 / JCM 10881 / RKU-1).